A 741-amino-acid polypeptide reads, in one-letter code: NAD(P)H-quinone oxidoreductase subunit 5, chloroplastic (741 aa).

Helical transmembrane passes span 9–29 (WVIP…LFFI), 39–59 (IWAF…IQLS), 89–109 (IDPL…LVLI), 125–145 (FVYI…SNLI), 147–167 (IYFF…FWFT), 185–205 (GDFG…SLEF), 219–239 (NGIN…GAVA), 258–278 (TPIS…FLLA), 280–300 (LFPL…VGTI), 327–347 (LGYM…FHLI), 354–374 (ALLF…VGYS), 396–416 (TTFL…CFWS), 425–445 (WLYS…TAFY), 542–562 (LFPL…GISF), 605–625 (AISS…LYGS), and 721–741 (ISSY…FFIS).

Belongs to the complex I subunit 5 family. As to quaternary structure, NDH is composed of at least 16 different subunits, 5 of which are encoded in the nucleus.

Its subcellular location is the plastid. The protein localises to the chloroplast thylakoid membrane. It carries out the reaction a plastoquinone + NADH + (n+1) H(+)(in) = a plastoquinol + NAD(+) + n H(+)(out). The catalysed reaction is a plastoquinone + NADPH + (n+1) H(+)(in) = a plastoquinol + NADP(+) + n H(+)(out). Its function is as follows. NDH shuttles electrons from NAD(P)H:plastoquinone, via FMN and iron-sulfur (Fe-S) centers, to quinones in the photosynthetic chain and possibly in a chloroplast respiratory chain. The immediate electron acceptor for the enzyme in this species is believed to be plastoquinone. Couples the redox reaction to proton translocation, and thus conserves the redox energy in a proton gradient. This chain is NAD(P)H-quinone oxidoreductase subunit 5, chloroplastic (ndhF), found in Lolium perenne (Perennial ryegrass).